Here is a 102-residue protein sequence, read N- to C-terminus: NADH-quinone oxidoreductase subunit K (102 aa).

Helical transmembrane passes span 5-25 (IAHY…GIFL), 31-51 (IVIL…FVAF), and 66-86 (FVLT…VVFF).

Belongs to the complex I subunit 4L family. In terms of assembly, NDH-1 is composed of 14 different subunits. Subunits NuoA, H, J, K, L, M, N constitute the membrane sector of the complex.

It is found in the cell inner membrane. It carries out the reaction a quinone + NADH + 5 H(+)(in) = a quinol + NAD(+) + 4 H(+)(out). NDH-1 shuttles electrons from NADH, via FMN and iron-sulfur (Fe-S) centers, to quinones in the respiratory chain. The immediate electron acceptor for the enzyme in this species is believed to be ubiquinone. Couples the redox reaction to proton translocation (for every two electrons transferred, four hydrogen ions are translocated across the cytoplasmic membrane), and thus conserves the redox energy in a proton gradient. In Mesorhizobium japonicum (strain LMG 29417 / CECT 9101 / MAFF 303099) (Mesorhizobium loti (strain MAFF 303099)), this protein is NADH-quinone oxidoreductase subunit K.